We begin with the raw amino-acid sequence, 81 residues long: uncharacterized protein (81 aa).

This is an uncharacterized protein from Dictyostelium discoideum (Social amoeba).